The sequence spans 543 residues: MFS-type transporter pyvG (543 aa).

The segment at P24 to P71 is disordered. N94 is a glycosylation site (N-linked (GlcNAc...) asparagine). 12 helical membrane-spanning segments follow: residues L101–F121, L141–S161, I178–L198, G203–L223, L230–F250, W259–P279, P335–F355, G374–F394, L415–T435, L440–I460, A476–W496, and L512–P532.

This sequence belongs to the major facilitator superfamily. CAR1 family.

The protein localises to the cell membrane. Its function is as follows. MFS-type transporter; part of the gene cluster that mediates the biosynthesis of pyranoviolin A, a pyranonigrin analog with a C-3 methoxy group. May be involved in the secretion of pyranoviolin A. The polypeptide is MFS-type transporter pyvG (Aspergillus violaceofuscus (strain CBS 115571)).